A 227-amino-acid polypeptide reads, in one-letter code: Probable septum site-determining protein MinC (227 aa).

This sequence belongs to the MinC family. As to quaternary structure, interacts with MinD and FtsZ.

Functionally, cell division inhibitor that blocks the formation of polar Z ring septums. Rapidly oscillates between the poles of the cell to destabilize FtsZ filaments that have formed before they mature into polar Z rings. Prevents FtsZ polymerization. This is Probable septum site-determining protein MinC from Laribacter hongkongensis (strain HLHK9).